The following is a 311-amino-acid chain: Porphobilinogen deaminase (311 aa).

An S-(dipyrrolylmethanemethyl)cysteine modification is found at Cys240.

The protein belongs to the HMBS family. In terms of assembly, monomer. Requires dipyrromethane as cofactor.

The catalysed reaction is 4 porphobilinogen + H2O = hydroxymethylbilane + 4 NH4(+). It participates in porphyrin-containing compound metabolism; protoporphyrin-IX biosynthesis; coproporphyrinogen-III from 5-aminolevulinate: step 2/4. Functionally, tetrapolymerization of the monopyrrole PBG into the hydroxymethylbilane pre-uroporphyrinogen in several discrete steps. The protein is Porphobilinogen deaminase of Natranaerobius thermophilus (strain ATCC BAA-1301 / DSM 18059 / JW/NM-WN-LF).